Consider the following 929-residue polypeptide: Isoleucine--tRNA ligase (929 aa).

The short motif at 57 to 67 (PYANGNIHVGH) is the 'HIGH' region element. Glutamate 554 provides a ligand contact to L-isoleucyl-5'-AMP. The short motif at 595-599 (KMSKS) is the 'KMSKS' region element. An ATP-binding site is contributed by lysine 598. Residues cysteine 888, cysteine 891, cysteine 908, and cysteine 911 each coordinate Zn(2+).

The protein belongs to the class-I aminoacyl-tRNA synthetase family. IleS type 1 subfamily. As to quaternary structure, monomer. Requires Zn(2+) as cofactor.

The protein resides in the cytoplasm. It carries out the reaction tRNA(Ile) + L-isoleucine + ATP = L-isoleucyl-tRNA(Ile) + AMP + diphosphate. Its function is as follows. Catalyzes the attachment of isoleucine to tRNA(Ile). As IleRS can inadvertently accommodate and process structurally similar amino acids such as valine, to avoid such errors it has two additional distinct tRNA(Ile)-dependent editing activities. One activity is designated as 'pretransfer' editing and involves the hydrolysis of activated Val-AMP. The other activity is designated 'posttransfer' editing and involves deacylation of mischarged Val-tRNA(Ile). This is Isoleucine--tRNA ligase from Streptococcus thermophilus (strain CNRZ 1066).